The chain runs to 452 residues: MTTGFAAKDDVFARDILSVAQLNQAVGQLMERSIPPLWVRGEVSNFTQAASGHWYFTLKDAGAAVRTVMFRGRASMVGFVPRPGDEVEIRGRVSLYEPRGDYQLQADAMRRAGVGNLFEAFSRLKDKLASEGLFDASRKRVPLRLPRAIGVVTSLQAAALRDVLSALARRAPQVEIVIYPAPVQGADAASRLAAQVRQASARREVDTLLLVRGGGSIEDLWSFNDEDLARAVADCAIPVISGVGHETDFTIADFVADLRAPTPTAAAELACVPRAELLSALGHAASRLSRAQQRRLDLAAQRLDRASAQLVSPAQRLAHQCERLNTLRHRLAASAQRPLAASAARLTGLAQRLARRAPQTARVQDRVQSLAQRLLRGQQAGLAERGVRLQALAAQLRALDPEHTLARGYAVLRDAQGRVVSNASALVVGEGVRIDLAQGRVQADITDVQPRR.

It belongs to the XseA family. In terms of assembly, heterooligomer composed of large and small subunits.

It is found in the cytoplasm. The catalysed reaction is Exonucleolytic cleavage in either 5'- to 3'- or 3'- to 5'-direction to yield nucleoside 5'-phosphates.. Its function is as follows. Bidirectionally degrades single-stranded DNA into large acid-insoluble oligonucleotides, which are then degraded further into small acid-soluble oligonucleotides. The protein is Exodeoxyribonuclease 7 large subunit of Bordetella avium (strain 197N).